We begin with the raw amino-acid sequence, 708 residues long: Kelch-like protein 11 (708 aa).

The signal sequence occupies residues 1–15; that stretch reads MAAAAVAAAAAAAAA. Residues 47 to 70 are disordered; sequence DFGPGPGISAMEASGGDPGPEAED. Residues 94-170 enclose the BTB domain; it reads CDITLCFGGA…MYTGRIRVST (77 aa). The 103-residue stretch at 205 to 307 folds into the BACK domain; the sequence is CVAIHSLAHM…KPTYLTRHVK (103 aa). Kelch repeat units lie at residues 360–407, 408–453, 455–501, 503–556, and 610–661; these read VIMV…VTES, YVYV…EVKG, LYSI…AIED, FVYI…VVNS, and DVFI…HVRI. The residue at position 465 (serine 465) is a Phosphoserine.

In terms of assembly, component of a cullin-RING-based BCR (BTB-CUL3-RBX1) E3 ubiquitin-protein ligase complex. Homodimer. Interacts with CUL3.

Its function is as follows. Component of a cullin-RING-based BCR (BTB-CUL3-RBX1) E3 ubiquitin-protein ligase complex that mediates the ubiquitination of target proteins, leading most often to their proteasomal degradation. The protein is Kelch-like protein 11 (KLHL11) of Homo sapiens (Human).